Consider the following 339-residue polypeptide: UDP-N-acetylenolpyruvoylglucosamine reductase (339 aa).

Positions 19–189 (VDVQARLFAE…LRVRFKLSRV (171 aa)) constitute an FAD-binding PCMH-type domain. Arginine 166 is an active-site residue. Serine 239 serves as the catalytic Proton donor. The active site involves glutamate 335.

This sequence belongs to the MurB family. FAD serves as cofactor.

The protein localises to the cytoplasm. The enzyme catalyses UDP-N-acetyl-alpha-D-muramate + NADP(+) = UDP-N-acetyl-3-O-(1-carboxyvinyl)-alpha-D-glucosamine + NADPH + H(+). The protein operates within cell wall biogenesis; peptidoglycan biosynthesis. Cell wall formation. The sequence is that of UDP-N-acetylenolpyruvoylglucosamine reductase from Pseudomonas savastanoi pv. phaseolicola (strain 1448A / Race 6) (Pseudomonas syringae pv. phaseolicola (strain 1448A / Race 6)).